The sequence spans 283 residues: S-methyl-5'-thioadenosine phosphorylase (283 aa).

Thr18 serves as a coordination point for phosphate. At Lys51 the chain carries N6-acetyllysine. Phosphate is bound by residues 60–61 and 93–94; these read RH and TA. Met196 serves as a coordination point for substrate. A phosphate-binding site is contributed by Thr197. Residue 220–222 coordinates substrate; it reads DYD.

Belongs to the PNP/MTAP phosphorylase family. MTAP subfamily. In terms of assembly, homotrimer.

It localises to the cytoplasm. Its subcellular location is the nucleus. The catalysed reaction is S-methyl-5'-thioadenosine + phosphate = 5-(methylsulfanyl)-alpha-D-ribose 1-phosphate + adenine. Its pathway is amino-acid biosynthesis; L-methionine biosynthesis via salvage pathway; S-methyl-5-thio-alpha-D-ribose 1-phosphate from S-methyl-5'-thioadenosine (phosphorylase route): step 1/1. In terms of biological role, catalyzes the reversible phosphorylation of S-methyl-5'-thioadenosine (MTA) to adenine and 5-methylthioribose-1-phosphate. Involved in the breakdown of MTA, a major by-product of polyamine biosynthesis. Responsible for the first step in the methionine salvage pathway after MTA has been generated from S-adenosylmethionine. Has broad substrate specificity with 6-aminopurine nucleosides as preferred substrates. The sequence is that of S-methyl-5'-thioadenosine phosphorylase from Bos taurus (Bovine).